Consider the following 295-residue polypeptide: bZIP transcription factor 60 (295 aa).

The segment at 101 to 154 (PAAADDSGKENSDLVVEKKSNDSGSEIHDDDDEEGDDDAVAKKRRRRVRNRDAA) is disordered. The span at 106–127 (DSGKENSDLVVEKKSNDSGSEI) shows a compositional bias: basic and acidic residues. Over residues 128 to 138 (HDDDDEEGDDD) the composition is skewed to acidic residues. The bZIP domain occupies 140–203 (VAKKRRRRVR…QSLRYCLQKG (64 aa)). Residues 142–162 (KKRRRRVRNRDAAVRSRERKK) form a basic motif region. Residues 168–182 (LEKKSKYLERECLRL) are leucine-zipper. A helical transmembrane segment spans residues 224-244 (LLLGSLLWLLGVNFICLFPYM).

This sequence belongs to the bZIP family. Interacts with BZIP28. As to expression, expressed in seedlings, rosette and cauline leaves, stems, buds, flowers, siliques, immature seeds, anthers and pollen grains.

The protein resides in the endoplasmic reticulum membrane. The protein localises to the nucleus. Its function is as follows. Transcription factor involved in the unfolded protein response (UPR). Acts during endoplasmic reticulum stress (ER) by activating unfolded protein response (UPR) target genes via direct binding to the UPR element (UPRE). Plays a role in plant immunity and abiotic stress responses. This chain is bZIP transcription factor 60, found in Arabidopsis thaliana (Mouse-ear cress).